We begin with the raw amino-acid sequence, 891 residues long: MNLHLVDSDGHLEAEKKLTEYLTSIVAPSVSPSRGSATADGDYGNGALEAVGLNYHVVGVFGGQSSGKSTLLNHLFGTHFQMLDETVRRGQTTKGAFMALANTALAGLEASDVAVVAPRLAPSAADRSSRLNHAVAAAVTNNTTGGAPPTGSPLLVLDFEGTDGLERGEDQCFERQLSLFGLSIVDTLIINMWAVDVGRFNAANLSLLRTIFEVNLQLFSHSNYEAEEKPTLLVVLRDFTEDDPLPSLTTVRKSFDTIWESITRPAQFEDTSIDALFHLKYYVMPHYRLQKEEFMASVETLRRWFGDSRCSDYLFSYHSMFRGVPLDGLPAYLTNCWAAIRTSKDLDIPTQREMLAQHRCKEAKEQELMTYRDFARGYEDRLLRGEMLLRLSEVLDEEMETRLTAFYRQTKLYSSAVVGQYANELETELVDATMQVLNRLSKAIATEVLSNVESRVLNSVEESLRQLLKSAQTLPFSAGEDSSTTEPAEAHDADEDAARLLGAQRMDSAACQRLVRGFWRTLSIQVKEVVAEVAAMPPRAHLYGRYAVLIVQDPTTRLNVLNIVTDAFFQKVKSRLVSMANSACDTMHSGFERSLTYNSDGTVRFFATTRGLQKAVPAAVQAGLVVLGSLFYFRLKLVSAAVSDDDDLDTGATAALPQSRSARRVRHNRCHIVFDDNDAEAAFYLSYSTLDTAPKYPCDVPVPTLDCDREEVGVAADCVLLSQQATVRAYELYKQKCDFTTQLQLRAAEAGNQRLPAWVIPALFILGWNELLYVLTSPALLVLVVVICAVFFRQFFVSQWHAFEETGPASVVIPVRTVVHALSALVRSLLGDGQGSCPERAARNGSDVVASGEREMAHVKVTSTHADPAPSNTTVPTAQATMRHRTTHKLD.

The Cytoplasmic portion of the chain corresponds to 1-754 (MNLHLVDSDG…LRAAEAGNQR (754 aa)). Residues 52-318 (GLNYHVVGVF…RCSDYLFSYH (267 aa)) form the GB1/RHD3-type G domain. A GTP-binding site is contributed by 62–69 (GGQSSGKS). Residues 755-775 (LPAWVIPALFILGWNELLYVL) form a helical membrane-spanning segment. Residues 776 to 778 (TSP) lie on the Lumenal side of the membrane. A helical membrane pass occupies residues 779-799 (ALLVLVVVICAVFFRQFFVSQ). The Cytoplasmic portion of the chain corresponds to 800–891 (WHAFEETGPA…MRHRTTHKLD (92 aa)). Positions 863–880 (STHADPAPSNTTVPTAQA) are enriched in polar residues. The interval 863 to 891 (STHADPAPSNTTVPTAQATMRHRTTHKLD) is disordered. A compositionally biased stretch (basic residues) spans 882–891 (MRHRTTHKLD).

It belongs to the TRAFAC class dynamin-like GTPase superfamily. GB1/RHD3 GTPase family. RHD3 subfamily.

The protein resides in the endoplasmic reticulum membrane. Its function is as follows. Probable GTP-binding protein that may be involved in cell development. This chain is Protein SEY1 homolog, found in Leishmania braziliensis.